The following is a 294-amino-acid chain: MDPIDPELNEILDFTEYGPLTPIPQDDGENPLAKICYTTGYEQGMAYFRAIMAKKEYSLRALNLTGFLIMNNPAHYTVWAYRFQILNHTPSYIDNELEWLDEIAEDFQKNYQVWHHRQKILSLTKNYERELEFTKKMFEIDSKNYHVWSYRVWILQNFNDYSQELKLTNELLEKDIYNNSAWNHRFYVLFETSKVVSWSLEEELNYLKDKILFAPDNQSAWNYLCGVLDKSGPSKLDNLIANLRKNLPALHKPLLEFLAMYEPSSSEEIYQKLANEVDVPHAALWTWMSQRSNP.

5 PFTA repeats span residues 57 to 91, 92 to 125, 126 to 160, 161 to 194, and 199 to 233; these read YSLR…HTPS, YIDN…SLTK, NYER…NFND, YSQE…ETSK, and SLEE…KSGP.

It belongs to the protein prenyltransferase subunit alpha family. As to quaternary structure, heterodimer of an alpha(cwp1) and a beta(cpp1 or cwg2) subunit. Mg(2+) serves as cofactor.

It carries out the reaction L-cysteinyl-[protein] + (2E,6E)-farnesyl diphosphate = S-(2E,6E)-farnesyl-L-cysteinyl-[protein] + diphosphate. The enzyme catalyses geranylgeranyl diphosphate + L-cysteinyl-[protein] = S-geranylgeranyl-L-cysteinyl-[protein] + diphosphate. In terms of biological role, catalyzes the transfer of a farnesyl or geranyl-geranyl moiety from farnesyl or geranyl-geranyl diphosphate to a cysteine at the fourth position from the C-terminus of several proteins having the C-terminal sequence Cys-aliphatic-aliphatic-X. The alpha(cwp1) subunit is thought to participate in a stable complex with the substrate. The beta(cpp1 or cwg2) subunits bind the peptide substrate. The protein is Protein farnesyltransferase/geranylgeranyltransferase type-1 subunit alpha (cwp1) of Schizosaccharomyces pombe (strain 972 / ATCC 24843) (Fission yeast).